The chain runs to 376 residues: N-acetyldiaminopimelate deacetylase (376 aa).

Residue D69 is part of the active site. E128 serves as the catalytic Proton acceptor.

It belongs to the peptidase M20A family. N-acetyldiaminopimelate deacetylase subfamily.

The catalysed reaction is N-acetyl-(2S,6S)-2,6-diaminopimelate + H2O = (2S,6S)-2,6-diaminopimelate + acetate. Its pathway is amino-acid biosynthesis; L-lysine biosynthesis via DAP pathway; LL-2,6-diaminopimelate from (S)-tetrahydrodipicolinate (acetylase route): step 3/3. Functionally, catalyzes the conversion of N-acetyl-diaminopimelate to diaminopimelate and acetate. This Streptococcus pneumoniae (strain 70585) protein is N-acetyldiaminopimelate deacetylase.